The sequence spans 627 residues: Chaperone protein DnaK (627 aa).

Residue Thr197 is modified to Phosphothreonine; by autocatalysis. Low complexity predominate over residues 596–615; the sequence is MYAQGGDQGQQAAPQQEQSG. The disordered stretch occupies residues 596 to 627; the sequence is MYAQGGDQGQQAAPQQEQSGDNVEDVEFEEVK. The segment covering 617 to 627 has biased composition (acidic residues); sequence NVEDVEFEEVK.

Belongs to the heat shock protein 70 family.

In terms of biological role, acts as a chaperone. This chain is Chaperone protein DnaK, found in Flavobacterium johnsoniae (strain ATCC 17061 / DSM 2064 / JCM 8514 / BCRC 14874 / CCUG 350202 / NBRC 14942 / NCIMB 11054 / UW101) (Cytophaga johnsonae).